The following is a 682-amino-acid chain: Methionine--tRNA ligase (682 aa).

The 'HIGH' region signature appears at 14–24 (PYANGSIHLGH). The Zn(2+) site is built by Cys-145, Cys-148, Cys-158, and Cys-161. The 'KMSKS' region signature appears at 331–335 (KMSKS). Lys-334 serves as a coordination point for ATP. The 103-residue stretch at 580–682 (AFAAIDLRVA…SGARPGQRIK (103 aa)) folds into the tRNA-binding domain.

It belongs to the class-I aminoacyl-tRNA synthetase family. MetG type 1 subfamily. In terms of assembly, homodimer. The cofactor is Zn(2+).

Its subcellular location is the cytoplasm. The catalysed reaction is tRNA(Met) + L-methionine + ATP = L-methionyl-tRNA(Met) + AMP + diphosphate. Functionally, is required not only for elongation of protein synthesis but also for the initiation of all mRNA translation through initiator tRNA(fMet) aminoacylation. This is Methionine--tRNA ligase from Pseudomonas syringae pv. syringae (strain B728a).